Consider the following 312-residue polypeptide: Methionyl-tRNA formyltransferase (312 aa).

Ser117–Pro120 is a (6S)-5,6,7,8-tetrahydrofolate binding site.

This sequence belongs to the Fmt family.

It carries out the reaction L-methionyl-tRNA(fMet) + (6R)-10-formyltetrahydrofolate = N-formyl-L-methionyl-tRNA(fMet) + (6S)-5,6,7,8-tetrahydrofolate + H(+). Attaches a formyl group to the free amino group of methionyl-tRNA(fMet). The formyl group appears to play a dual role in the initiator identity of N-formylmethionyl-tRNA by promoting its recognition by IF2 and preventing the misappropriation of this tRNA by the elongation apparatus. The chain is Methionyl-tRNA formyltransferase from Bordetella bronchiseptica (strain ATCC BAA-588 / NCTC 13252 / RB50) (Alcaligenes bronchisepticus).